The sequence spans 727 residues: UvrABC system protein C (727 aa).

The 80-residue stretch at 16–95 folds into the GIY-YIG domain; the sequence is VDPGVYKFRD…IKEFDPRFNV (80 aa). One can recognise a UVR domain in the interval 208-243; that stretch reads DRLVRQLEARMQEASEELDFETAARLRDDVGALRRA. Disordered stretches follow at residues 503–527 and 679–727; these read DADQ…QTGR and SADV…TGVE. The span at 701–711 shows a compositional bias: basic and acidic residues; sequence NGADIPREPVE. Over residues 718-727 the composition is skewed to polar residues; sequence QSASQRTGVE.

This sequence belongs to the UvrC family. Interacts with UvrB in an incision complex.

Its subcellular location is the cytoplasm. Its function is as follows. The UvrABC repair system catalyzes the recognition and processing of DNA lesions. UvrC both incises the 5' and 3' sides of the lesion. The N-terminal half is responsible for the 3' incision and the C-terminal half is responsible for the 5' incision. This is UvrABC system protein C from Rhodococcus jostii (strain RHA1).